The chain runs to 150 residues: Large ribosomal subunit protein bL9 (150 aa).

It belongs to the bacterial ribosomal protein bL9 family.

Functionally, binds to the 23S rRNA. The polypeptide is Large ribosomal subunit protein bL9 (Serratia proteamaculans (strain 568)).